A 133-amino-acid chain; its full sequence is MKKKHKRLLITSGIFCFLSCIVFFILTTLKENISFFYTVSEAIVLQNSQKLIRVGGMVVENSVIRSESEVIFQMTDFNKSVVVKYQGILPPMFSEKSGVVVQGKMFDNSTFLADTVFAKHDENYMPKVLKQIP.

The Cytoplasmic segment spans residues 1-7; the sequence is MKKKHKR. The chain crosses the membrane as a helical; Signal-anchor for type II membrane protein span at residues 8-28; sequence LLITSGIFCFLSCIVFFILTT. Residues 29-133 are Periplasmic-facing; the sequence is LKENISFFYT…YMPKVLKQIP (105 aa). 2 residues coordinate heme: histidine 120 and tyrosine 124.

The protein belongs to the CcmE/CycJ family.

It localises to the cell inner membrane. Its function is as follows. Heme chaperone required for the biogenesis of c-type cytochromes. Transiently binds heme delivered by CcmC and transfers the heme to apo-cytochromes in a process facilitated by CcmF and CcmH. The polypeptide is Cytochrome c-type biogenesis protein CcmE (Wolbachia sp. subsp. Drosophila simulans (strain wRi)).